Here is a 326-residue protein sequence, read N- to C-terminus: Target of rapamycin complex subunit lst8 (326 aa).

WD repeat units lie at residues 1 to 37 (MNSNQGTVGSDPVILATAGYDHTVRFWQAHSGICTRT), 40 to 80 (HQDS…PVIN), 83 to 122 (GVSKNITSVGFHEDGRWMYTGGEDCMARIWDLRSRNLQCQ), 126 to 165 (QVNAPINCVFLHPNQAELIVGDQSGAIHIWDLKTDQNEQL), 168 to 207 (ETDVSINSVHIDPDASYMAAVNSSGNCFVWNLTGGLGEDL), 218 to 257 (AHKRCALKCKFSPDSTLLATCSADQTCKIWRTSNFSLMTE), and 268 to 309 (TSRG…REYS).

This sequence belongs to the WD repeat LST8 family. In terms of assembly, part of the mechanistic target of rapamycin complex 1 (mTORC1) which contains MTOR, MLST8 and RPTOR. Component of the mechanistic target of rapamycin complex 2 (mTORC2), consisting in two heterotretramers composed of MTOR, MLST8, RICTOR and MAPKAP1/SIN1.

It is found in the lysosome membrane. It localises to the cytoplasm. Functionally, subunit of both mTORC1 and mTORC2, which regulates cell growth and survival in response to nutrient and hormonal signals. mTORC1 is activated in response to growth factors or amino acids. In response to nutrients, mTORC1 is recruited to the lysosome membrane and promotes protein, lipid and nucleotide synthesis by phosphorylating several substrates, such as ribosomal protein S6 kinase (RPS6KB1 and RPS6KB2) and EIF4EBP1 (4E-BP1). In the same time, it inhibits catabolic pathways by phosphorylating the autophagy initiation components ULK1 and ATG13, as well as transcription factor TFEB, a master regulators of lysosomal biogenesis and autophagy. The mTORC1 complex is inhibited in response to starvation and amino acid depletion. Within mTORC1, MLST8 interacts directly with MTOR and enhances its kinase activity. In nutrient-poor conditions, stabilizes the MTOR-RPTOR interaction and favors RPTOR-mediated inhibition of MTOR activity. As part of the mTORC2 complex, transduces signals from growth factors to pathways involved in proliferation, cytoskeletal organization, lipogenesis and anabolic output. mTORC2 is also activated by growth factors, but seems to be nutrient-insensitive. In response to growth factors, mTORC2 phosphorylates and activates AGC protein kinase family members, including AKT (AKT1, AKT2 and AKT3), PKC (PRKCA, PRKCB and PRKCE) and SGK1. mTORC2 functions upstream of Rho GTPases to regulate the actin cytoskeleton, probably by activating one or more Rho-type guanine nucleotide exchange factors. mTORC2 promotes the serum-induced formation of stress-fibers or F-actin. Within mTORC2, MLST8 acts as a bridge between MAPKAP1/SIN1 and MTOR. The protein is Target of rapamycin complex subunit lst8 (mlst8) of Xenopus tropicalis (Western clawed frog).